The following is a 128-amino-acid chain: Cystatin-12 (128 aa).

An N-terminal signal peptide occupies residues 1 to 21; sequence MLWKSVLSVALIVLGIHDCSF. Disulfide bonds link cysteine 82-cysteine 92 and cysteine 105-cysteine 125. Asparagine 122 carries N-linked (GlcNAc...) asparagine glycosylation.

This sequence belongs to the cystatin family. Located at the very proximal caput epididymis (at protein level). Expressed in epididymis, Sertoli cells and testis. Also found to be weakly expressed in ovary and prostate.

The protein resides in the secreted. Functionally, may play a specialized role in spermatogenesis. This chain is Cystatin-12 (Cst12), found in Mus musculus (Mouse).